A 76-amino-acid polypeptide reads, in one-letter code: Exodeoxyribonuclease 7 small subunit (76 aa).

The protein belongs to the XseB family. As to quaternary structure, heterooligomer composed of large and small subunits.

The protein localises to the cytoplasm. It carries out the reaction Exonucleolytic cleavage in either 5'- to 3'- or 3'- to 5'-direction to yield nucleoside 5'-phosphates.. Bidirectionally degrades single-stranded DNA into large acid-insoluble oligonucleotides, which are then degraded further into small acid-soluble oligonucleotides. The sequence is that of Exodeoxyribonuclease 7 small subunit from Bacillus mycoides (strain KBAB4) (Bacillus weihenstephanensis).